The sequence spans 437 residues: GTPase Obg (437 aa).

The Obg domain maps to 2 to 160; that stretch reads SMFLDTAKIS…RELQLELKIL (159 aa). Residues 127–146 form a disordered region; the sequence is GNIRFATPRNPAPEIAENGE. An OBG-type G domain is found at 161 to 338; that stretch reads ADVGLVGFPS…LLEATAELLD (178 aa). GTP is bound by residues 167 to 174, 192 to 196, 214 to 217, 284 to 287, and 319 to 321; these read GFPSVGKS, FTTIV, DLPG, NKMD, and SSL. Mg(2+) contacts are provided by serine 174 and threonine 194. In terms of domain architecture, OCT spans 359-437; it reads GFNEEERPFE…IGNFEFEFVD (79 aa).

Belongs to the TRAFAC class OBG-HflX-like GTPase superfamily. OBG GTPase family. Monomer. Mg(2+) is required as a cofactor.

Its subcellular location is the cytoplasm. In terms of biological role, an essential GTPase which binds GTP, GDP and possibly (p)ppGpp with moderate affinity, with high nucleotide exchange rates and a fairly low GTP hydrolysis rate. Plays a role in control of the cell cycle, stress response, ribosome biogenesis and in those bacteria that undergo differentiation, in morphogenesis control. This Streptococcus thermophilus (strain ATCC BAA-491 / LMD-9) protein is GTPase Obg.